Here is a 456-residue protein sequence, read N- to C-terminus: Bifunctional protein GlmU (456 aa).

The pyrophosphorylase stretch occupies residues 1 to 229 (MYKSAVILAA…PDEIKGVNSR (229 aa)). UDP-N-acetyl-alpha-D-glucosamine is bound by residues 8 to 11 (LAAG), Lys22, Gln73, and 78 to 79 (GT). Residue Asp103 coordinates Mg(2+). Residues Gly140, Glu155, Asn170, and Asn227 each coordinate UDP-N-acetyl-alpha-D-glucosamine. Asn227 serves as a coordination point for Mg(2+). The tract at residues 230-250 (GQLAEAEEILRLRINERHMEN) is linker. The tract at residues 251-456 (GVTLIDPKNT…GWVAKKGLKK (206 aa)) is N-acetyltransferase. Positions 332 and 350 each coordinate UDP-N-acetyl-alpha-D-glucosamine. His362 (proton acceptor) is an active-site residue. Tyr365 and Asn376 together coordinate UDP-N-acetyl-alpha-D-glucosamine. Residues 385–386 (NY), Ala422, and Arg439 each bind acetyl-CoA.

The protein in the N-terminal section; belongs to the N-acetylglucosamine-1-phosphate uridyltransferase family. It in the C-terminal section; belongs to the transferase hexapeptide repeat family. Homotrimer. Requires Mg(2+) as cofactor.

The protein resides in the cytoplasm. The catalysed reaction is alpha-D-glucosamine 1-phosphate + acetyl-CoA = N-acetyl-alpha-D-glucosamine 1-phosphate + CoA + H(+). It carries out the reaction N-acetyl-alpha-D-glucosamine 1-phosphate + UTP + H(+) = UDP-N-acetyl-alpha-D-glucosamine + diphosphate. It participates in nucleotide-sugar biosynthesis; UDP-N-acetyl-alpha-D-glucosamine biosynthesis; N-acetyl-alpha-D-glucosamine 1-phosphate from alpha-D-glucosamine 6-phosphate (route II): step 2/2. It functions in the pathway nucleotide-sugar biosynthesis; UDP-N-acetyl-alpha-D-glucosamine biosynthesis; UDP-N-acetyl-alpha-D-glucosamine from N-acetyl-alpha-D-glucosamine 1-phosphate: step 1/1. The protein operates within bacterial outer membrane biogenesis; LPS lipid A biosynthesis. Functionally, catalyzes the last two sequential reactions in the de novo biosynthetic pathway for UDP-N-acetylglucosamine (UDP-GlcNAc). The C-terminal domain catalyzes the transfer of acetyl group from acetyl coenzyme A to glucosamine-1-phosphate (GlcN-1-P) to produce N-acetylglucosamine-1-phosphate (GlcNAc-1-P), which is converted into UDP-GlcNAc by the transfer of uridine 5-monophosphate (from uridine 5-triphosphate), a reaction catalyzed by the N-terminal domain. In Clostridium novyi (strain NT), this protein is Bifunctional protein GlmU.